A 277-amino-acid polypeptide reads, in one-letter code: uncharacterized protein (277 aa).

This sequence belongs to the BtpA family.

The protein localises to the mitochondrion. This is an uncharacterized protein from Caenorhabditis elegans.